The chain runs to 309 residues: tRNA pseudouridine synthase B (309 aa).

The active-site Nucleophile is the Asp45.

It belongs to the pseudouridine synthase TruB family. Type 1 subfamily.

It catalyses the reaction uridine(55) in tRNA = pseudouridine(55) in tRNA. Functionally, responsible for synthesis of pseudouridine from uracil-55 in the psi GC loop of transfer RNAs. The sequence is that of tRNA pseudouridine synthase B from Oleidesulfovibrio alaskensis (strain ATCC BAA-1058 / DSM 17464 / G20) (Desulfovibrio alaskensis).